Consider the following 806-residue polypeptide: Ribonucleoside-diphosphate reductase large subunit-like protein (806 aa).

Belongs to the ribonucleoside diphosphate reductase large chain family.

Its subcellular location is the virion. The protein resides in the host cytoplasm. Functionally, does not possess a ribonucleotide reductase activity. Betaherpesviruses probably use another strategy to expand the dNTP pool in a quiescent host cell. In Human herpesvirus 7 (strain JI) (HHV-7), this protein is Ribonucleoside-diphosphate reductase large subunit-like protein.